The primary structure comprises 135 residues: Large ribosomal subunit protein uL16c (135 aa).

This sequence belongs to the universal ribosomal protein uL16 family. In terms of assembly, part of the 50S ribosomal subunit.

It localises to the plastid. Its subcellular location is the chloroplast. The protein is Large ribosomal subunit protein uL16c of Cucumis sativus (Cucumber).